Consider the following 314-residue polypeptide: Solute carrier family 25 member 44 (314 aa).

Solcar repeat units follow at residues 18–100, 107–210, and 220–302; these read KKFY…TRKF, SNTV…YAEQ, and PHIV…LKKL. Helical transmembrane passes span 20–42, 71–90, 113–133, 185–201, 222–239, and 278–296; these read FYVF…TLIR, TGLY…GQCY, LVAG…IDVV, GYVA…AVWW, IVFQ…ASIL, and LSAR…VVGY.

Belongs to the mitochondrial carrier (TC 2.A.29) family.

The protein resides in the mitochondrion membrane. The catalysed reaction is L-valine(in) = L-valine(out). The enzyme catalyses L-leucine(in) = L-leucine(out). Functionally, mitochondrial solute transporter which transports branched-chain amino acid (BCAA; valine, leucine and isoleucine) into mitochondria in brown adipose tissue (BAT). BAT is involved in BCAA catabolism and actively utilizes BCAA in the mitochondria for thermogenesis. This chain is Solute carrier family 25 member 44, found in Pongo abelii (Sumatran orangutan).